A 126-amino-acid chain; its full sequence is Histone H2B 8 (126 aa).

Positions 1–12 (MPEPAKSAPAPK) are enriched in low complexity. Residues 1 to 35 (MPEPAKSAPAPKKGSKKAVTKTQKKGDKKRRKTRK) form a disordered region. Residues Lys6 and Lys13 each carry the N6-acetyllysine modification. Residues 13–34 (KGSKKAVTKTQKKGDKKRRKTR) show a composition bias toward basic residues. At Ser15 the chain carries Phosphoserine. N6-acetyllysine is present on residues Lys16 and Lys21. O-linked (GlcNAc) serine glycosylation occurs at Ser113. Residue Lys121 forms a Glycyl lysine isopeptide (Lys-Gly) (interchain with G-Cter in ubiquitin) linkage.

Belongs to the histone H2B family. The nucleosome is a histone octamer containing two molecules each of H2A, H2B, H3 and H4 assembled in one H3-H4 heterotetramer and two H2A-H2B heterodimers. The octamer wraps approximately 147 bp of DNA. Post-translationally, monoubiquitination of Lys-121 by the BRE1 gives a specific tag for epigenetic transcriptional activation and is also prerequisite for histone H3 'Lys-4' and 'Lys-79' methylation. In terms of processing, phosphorylated on Ser-15 during apoptosis; which facilitates apoptotic chromatin condensation. GlcNAcylation at Ser-113 promotes monoubiquitination of Lys-121. It fluctuates in response to extracellular glucose, and associates with transcribed genes.

It localises to the nucleus. It is found in the chromosome. Functionally, core component of nucleosome. Nucleosomes wrap and compact DNA into chromatin, limiting DNA accessibility to the cellular machineries which require DNA as a template. Histones thereby play a central role in transcription regulation, DNA repair, DNA replication and chromosomal stability. DNA accessibility is regulated via a complex set of post-translational modifications of histones, also called histone code, and nucleosome remodeling. The chain is Histone H2B 8 (H2B-VIII) from Gallus gallus (Chicken).